The chain runs to 504 residues: Galactan beta-1,4-galactosyltransferase GALS3 (504 aa).

The helical transmembrane segment at 30–50 (LTFMALLVLCTLATLLPFIPS) threads the bilayer. One can recognise a GT92 domain in the interval 242-456 (DYLYCGSSLY…YHGSISQRRE (215 aa)).

It belongs to the glycosyltransferase 92 family. In terms of tissue distribution, expressed in root caps, mature leaves, top of the stems and seeds.

Its subcellular location is the golgi apparatus membrane. Its function is as follows. Involved in the biosynthesis of beta-1,4-galactan. Beta-1,4-galactans are abundant polysaccharides in plant cell walls and are found as side-chain of rhamnogalacturonan I, which is a major component of pectin. The sequence is that of Galactan beta-1,4-galactosyltransferase GALS3 from Arabidopsis thaliana (Mouse-ear cress).